The following is a 431-amino-acid chain: tRNA (adenine(37)-N6)-methyltransferase (431 aa).

Residues T30–N168 form the TsaA-like domain. S-adenosyl-L-methionine-binding positions include P47–Q49, H90–K91, R117, L127, and I148–T151. 2 disordered regions span residues Q167–N189 and K201–R243. The segment covering S207 to R243 has biased composition (basic and acidic residues).

The protein belongs to the tRNA methyltransferase O family.

It carries out the reaction N(6)-L-threonylcarbamoyladenosine(37) in tRNA + S-adenosyl-L-methionine = N(6)-methyl,N(6)-L-threonylcarbamoyladenosine(37) in tRNA + S-adenosyl-L-homocysteine + H(+). Functionally, S-adenosyl-L-methionine-dependent methyltransferase responsible for the addition of the methyl group in the formation of N6-methyl-N6-threonylcarbamoyladenosine at position 37 (m(6)t(6)A37) of the tRNA anticodon loop of tRNA(Ser)(GCU). The methyl group of m(6)t(6)A37 may improve the efficiency of the tRNA decoding ability. May bind to tRNA. This Rattus norvegicus (Rat) protein is tRNA (adenine(37)-N6)-methyltransferase.